The sequence spans 929 residues: Collagen alpha-1(XII) chain (929 aa).

Residues 1-49 (DVEIFAVGVKDAVRSELEAIATPPTATHVYTVEDFDAFQRISFELTQSI) form the VWFA 1 domain. Fibronectin type-III domains lie at 67-156 (PPRD…LEVR), 158-250 (APRN…VGEP), 251-340 (KNLR…LQER), 342-432 (SPRD…ASPD), 434-521 (KIVK…LSPF), and 523-613 (APRS…TLRD). N-linked (GlcNAc...) asparagine glycosylation occurs at N98. S231, S324, and S415 each carry an O-linked (Xyl...) (chondroitin sulfate) serine glycan. The 173-residue stretch at 633–805 (DIVLLVDGSW…SLLTNIVNDL (173 aa)) folds into the VWFA 2 domain. The region spanning 821–910 (PPSNLVTSEP…AGTETTLPIP (90 aa)) is the Fibronectin type-III 7 domain.

This sequence belongs to the fibril-associated collagens with interrupted helices (FACIT) family. In terms of assembly, trimer of identical chains each containing 190 kDa of non-triple-helical sequences. The triple-helical tail is stabilized by disulfide bonds at each end. In terms of processing, prolines at the third position of the tripeptide repeating unit (G-X-Y) are hydroxylated in some or all of the chains.

The protein localises to the secreted. It localises to the extracellular space. Its subcellular location is the extracellular matrix. Type XII collagen interacts with type I collagen-containing fibrils, the COL1 domain could be associated with the surface of the fibrils, and the COL2 and NC3 domains may be localized in the perifibrillar matrix. Could play a developmental role in regeneration. The sequence is that of Collagen alpha-1(XII) chain from Notophthalmus viridescens (Eastern newt).